The chain runs to 317 residues: Ferrochelatase (317 aa).

Residues His192 and Glu271 each contribute to the Fe cation site.

It belongs to the ferrochelatase family.

It is found in the cytoplasm. The catalysed reaction is heme b + 2 H(+) = protoporphyrin IX + Fe(2+). It functions in the pathway porphyrin-containing compound metabolism; protoheme biosynthesis; protoheme from protoporphyrin-IX: step 1/1. Its function is as follows. Catalyzes the ferrous insertion into protoporphyrin IX. This Citrifermentans bemidjiense (strain ATCC BAA-1014 / DSM 16622 / JCM 12645 / Bem) (Geobacter bemidjiensis) protein is Ferrochelatase.